The sequence spans 2383 residues: Highly reducing polyketide synthase SAT13 (2383 aa).

Positions 6–433 (PVPLAIVGIA…GTNAHAVLER (428 aa)) constitute a Ketosynthase family 3 (KS3) domain. Catalysis depends on for beta-ketoacyl synthase activity residues C180, H315, and H355. The segment at 536 to 828 (FIFTGQGAQW…IGPHSALAGP (293 aa)) is malonyl-CoA:ACP transacylase (MAT) domain. S626 acts as the For malonyltransferase activity in catalysis. The N-terminal hotdog fold stretch occupies residues 922–1062 (HDLLGLRMTE…GNIVVVFKTS (141 aa)). The dehydratase (DH) domain stretch occupies residues 922–1239 (HDLLGLRMTE…GMELRSFVAR (318 aa)). Residues 922–1242 (HDLLGLRMTE…LRSFVARDSN (321 aa)) form the PKS/mFAS DH domain. The active-site Proton acceptor; for dehydratase activity is the H954. A C-terminal hotdog fold region spans residues 1087–1242 (GKLTHAGQLY…LRSFVARDSN (156 aa)). D1152 (proton donor; for dehydratase activity) is an active-site residue. Residues 1669–1977 (DGQNRLVFVE…KQGSMKKCVL (309 aa)) form an enoylreductase (ER) domain region. The tract at residues 2001–2184 (ATYVVAGGLG…MSLNIGGIKD (184 aa)) is catalytic ketoreductase (KRc) domain. The 78-residue stretch at 2287–2364 (EISEFVARSI…DLAQKVVSRS (78 aa)) folds into the Carrier domain. S2324 carries the post-translational modification O-(pantetheine 4'-phosphoryl)serine.

It participates in mycotoxin biosynthesis. Its function is as follows. Highly reducing polyketide synthase; part of the satratoxin SC2 cluster involved in the biosynthesis of satratoxins, trichothecene mycotoxins that are associated with human food poisonings. Satratoxins are suggested to be made by products of multiple gene clusters (SC1, SC2 and SC3) that encode 21 proteins in all, including polyketide synthases, acetyltransferases, and other enzymes expected to modify the trichothecene skeleton. SC1 encodes 10 proteins, SAT1 to SAT10. The largest are SAT8, which encodes a putative polyketide synthase (PKS) with a conventional non-reducing architecture, and SAT10, a putative protein containing four ankyrin repeats and thus may be involved in protein scaffolding. The putative short-chain reductase SAT3 may assist the PKS in some capacity. SAT6 contains a secretory lipase domain and acts probably as a trichothecene esterase. SAT5 encodes a putative acetyltransferase, and so, with SAT6, may affect endogenous protection from toxicity. The probable transcription factor SAT9 may regulate the expression of the SC1 cluster. SC2 encodes proteins SAT11 to SAT16, the largest of which encodes the putative reducing PKS SAT13. SAT11 is a cytochrome P450 monooxygenase, while SAT14 and SAT16 are probable acetyltransferases. The SC2 cluster may be regulated by the transcription factor SAT15. SC3 is a small cluster that encodes 5 proteins, SAT17 to SAT21. SAT21 is a putative MFS-type transporter which may have a role in exporting secondary metabolites. The four other proteins putatively encoded in SC3 include the taurine hydroxylase-like protein SAT17, the O-methyltransferase SAT18, the acetyltransferase SAT19, and the Cys6-type zinc finger SAT20, the latter being probably involved in regulation of SC3 expression. The polypeptide is Highly reducing polyketide synthase SAT13 (Stachybotrys chartarum (strain CBS 109288 / IBT 7711) (Toxic black mold)).